Reading from the N-terminus, the 125-residue chain is Interleukin-6 (125 aa).

C16 and C26 are joined by a disulfide.

This sequence belongs to the IL-6 superfamily. Component of a hexamer of two molecules each of IL6, IL6R and IL6ST; first binds to IL6R to associate with the signaling subunit IL6ST. Interacts with IL6R (via the N-terminal ectodomain); this interaction may be affected by IL6R-binding with SORL1, hence decreasing IL6 cis signaling. Interacts with SORL1 (via the N-terminal ectodomain); this interaction leads to IL6 internalization and lysosomal degradation. May form a trimeric complex with the soluble SORL1 ectodomain and soluble IL6R receptor; this interaction might stabilize circulating IL6, hence promoting IL6 trans signaling.

It is found in the secreted. Its function is as follows. Cytokine with a wide variety of biological functions in immunity, tissue regeneration, and metabolism. Binds to IL6R, then the complex associates to the signaling subunit IL6ST/gp130 to trigger the intracellular IL6-signaling pathway. The interaction with the membrane-bound IL6R and IL6ST stimulates 'classic signaling', whereas the binding of IL6 and soluble IL6R to IL6ST stimulates 'trans-signaling'. Alternatively, 'cluster signaling' occurs when membrane-bound IL6:IL6R complexes on transmitter cells activate IL6ST receptors on neighboring receiver cells. In terms of biological role, IL6 is a potent inducer of the acute phase response. Rapid production of IL6 contributes to host defense during infection and tissue injury, but excessive IL6 synthesis is involved in disease pathology. In the innate immune response, is synthesized by myeloid cells, such as macrophages and dendritic cells, upon recognition of pathogens through toll-like receptors (TLRs) at the site of infection or tissue injury. In the adaptive immune response, is required for the differentiation of B cells into immunoglobulin-secreting cells. Plays a major role in the differentiation of CD4(+) T cell subsets. Essential factor for the development of T follicular helper (Tfh) cells that are required for the induction of germinal-center formation. Required to drive naive CD4(+) T cells to the Th17 lineage. Also required for proliferation of myeloma cells and the survival of plasmablast cells. Functionally, acts as an essential factor in bone homeostasis and on vessels directly or indirectly by induction of VEGF, resulting in increased angiogenesis activity and vascular permeability. Induces, through 'trans-signaling' and synergistically with IL1B and TNF, the production of VEGF. Involved in metabolic controls, is discharged into the bloodstream after muscle contraction increasing lipolysis and improving insulin resistance. 'Trans-signaling' in central nervous system also regulates energy and glucose homeostasis. Mediates, through GLP-1, crosstalk between insulin-sensitive tissues, intestinal L cells and pancreatic islets to adapt to changes in insulin demand. Also acts as a myokine. Plays a protective role during liver injury, being required for maintenance of tissue regeneration. Also has a pivotal role in iron metabolism by regulating HAMP/hepcidin expression upon inflammation or bacterial infection. Through activation of IL6ST-YAP-NOTCH pathway, induces inflammation-induced epithelial regeneration. This Neovison vison (American mink) protein is Interleukin-6 (IL6).